The primary structure comprises 250 residues: Ubiquinone/menaquinone biosynthesis C-methyltransferase UbiE (250 aa).

Residues threonine 73, aspartate 94, and aspartate 122–alanine 123 each bind S-adenosyl-L-methionine.

Belongs to the class I-like SAM-binding methyltransferase superfamily. MenG/UbiE family.

The catalysed reaction is a 2-demethylmenaquinol + S-adenosyl-L-methionine = a menaquinol + S-adenosyl-L-homocysteine + H(+). It catalyses the reaction a 2-methoxy-6-(all-trans-polyprenyl)benzene-1,4-diol + S-adenosyl-L-methionine = a 5-methoxy-2-methyl-3-(all-trans-polyprenyl)benzene-1,4-diol + S-adenosyl-L-homocysteine + H(+). Its pathway is quinol/quinone metabolism; menaquinone biosynthesis; menaquinol from 1,4-dihydroxy-2-naphthoate: step 2/2. The protein operates within cofactor biosynthesis; ubiquinone biosynthesis. In terms of biological role, methyltransferase required for the conversion of demethylmenaquinol (DMKH2) to menaquinol (MKH2) and the conversion of 2-polyprenyl-6-methoxy-1,4-benzoquinol (DDMQH2) to 2-polyprenyl-3-methyl-6-methoxy-1,4-benzoquinol (DMQH2). The sequence is that of Ubiquinone/menaquinone biosynthesis C-methyltransferase UbiE from Coxiella burnetii (strain CbuK_Q154) (Coxiella burnetii (strain Q154)).